The primary structure comprises 55 residues: Small ribosomal subunit protein eS31 (55 aa).

Zn(2+) is bound by residues cysteine 27, cysteine 30, cysteine 45, and cysteine 48. The segment at 27 to 48 (CSRCGKGFFMAQHKDRRSCGKC) adopts a C4-type zinc-finger fold.

Belongs to the eukaryotic ribosomal protein eS31 family. As to quaternary structure, part of the 30S ribosomal subunit. Requires Zn(2+) as cofactor.

This Cenarchaeum symbiosum (strain A) protein is Small ribosomal subunit protein eS31.